We begin with the raw amino-acid sequence, 360 residues long: Dihydroorotate dehydrogenase (quinone) (360 aa).

FMN contacts are provided by residues 67–71 and threonine 91; that span reads AGLDK. Lysine 71 contacts substrate. 116-120 contributes to the substrate binding site; sequence NRMGF. 2 residues coordinate FMN: asparagine 145 and asparagine 176. Asparagine 176 contacts substrate. Catalysis depends on serine 179, which acts as the Nucleophile. Residue asparagine 181 participates in substrate binding. Residues lysine 222 and serine 250 each contribute to the FMN site. Substrate is bound at residue 251–252; it reads NT. FMN contacts are provided by residues glycine 272, glycine 301, and 322–323; that span reads YS.

The protein belongs to the dihydroorotate dehydrogenase family. Type 2 subfamily. As to quaternary structure, monomer. FMN serves as cofactor.

It is found in the cell membrane. The catalysed reaction is (S)-dihydroorotate + a quinone = orotate + a quinol. It functions in the pathway pyrimidine metabolism; UMP biosynthesis via de novo pathway; orotate from (S)-dihydroorotate (quinone route): step 1/1. Catalyzes the conversion of dihydroorotate to orotate with quinone as electron acceptor. The chain is Dihydroorotate dehydrogenase (quinone) from Deinococcus deserti (strain DSM 17065 / CIP 109153 / LMG 22923 / VCD115).